A 615-amino-acid chain; its full sequence is Coagulation factor XII (615 aa).

An N-terminal signal peptide occupies residues 1-19 (MRALLLLGFLLVSLESTLS). A Fibronectin type-II domain is found at 42-90 (VTGEPCHFPFQYHRQLYHKCTHKGRPGPQPWCATTPNFDQDQRWGYCLE). 13 cysteine pairs are disulfide-bonded: cysteine 47–cysteine 73, cysteine 61–cysteine 88, cysteine 98–cysteine 110, cysteine 104–cysteine 119, cysteine 121–cysteine 130, cysteine 135–cysteine 163, cysteine 161–cysteine 170, cysteine 178–cysteine 189, cysteine 183–cysteine 198, cysteine 200–cysteine 209, cysteine 217–cysteine 295, cysteine 238–cysteine 277, and cysteine 266–cysteine 290. The region spanning 94-131 (VKDHCSKHSPCQKGGTCVNMPSGPHCLCPQHLTGNHCQ) is the EGF-like 1 domain. O-linked (Fuc) threonine glycosylation occurs at threonine 109. The 41-residue stretch at 133-173 (EKCFEPQLLRFFHKNEIWYRTEQAAVARCQCKGPDAHCQRL) folds into the Fibronectin type-I domain. Positions 174 to 210 (ASQACRTNPCLHGGRCLEVEGHRLCHCPVGYTGAFCD) constitute an EGF-like 2 domain. The 79-residue stretch at 217 to 295 (CYDGRGLSYR…SWEYCDLAQC (79 aa)) folds into the Kringle domain. A glycan (N-linked (GlcNAc...) asparagine) is linked at asparagine 249. The disordered stretch occupies residues 298 to 359 (PTQAAPPTPV…SLTRNGPLSC (62 aa)). Threonine 299 and threonine 305 each carry an O-linked (GalNAc...) threonine glycan. Residue serine 308 is glycosylated (O-linked (GalNAc...) serine). A compositionally biased stretch (pro residues) spans 317–326 (PAQPAPPKPQ). The segment covering 327–338 (PTTRTPPQSQTP) has biased composition (low complexity). Residues threonine 328, threonine 329, and threonine 337 are each glycosylated (O-linked (GalNAc...) threonine). 7 disulfide bridges follow: cysteine 359–cysteine 486, cysteine 397–cysteine 413, cysteine 405–cysteine 475, cysteine 436–cysteine 439, cysteine 500–cysteine 569, cysteine 532–cysteine 548, and cysteine 559–cysteine 590. One can recognise a Peptidase S1 domain in the interval 373 to 614 (VVGGLVALRG…YLAWIREHTV (242 aa)). Histidine 412 acts as the Charge relay system in catalysis. Residue asparagine 433 is glycosylated (N-linked (GlcNAc...) asparagine). The Charge relay system role is filled by aspartate 461. Serine 563 functions as the Charge relay system in the catalytic mechanism.

It belongs to the peptidase S1 family. As to quaternary structure, interacts with HRG; the interaction, which is enhanced in the presence of zinc ions and inhibited by heparin-binding, inhibits factor XII autoactivation and contact-initiated coagulation. Interacts (inactive and activated) with D7L2, an anticoagulant protein from Anopheles gambiae. Interacts (activated) with iripin-8, a serine protease inhibitor from Ixodes ricinus saliva. Interacts (inactive and activated) (via amino acids 1-77) with triafestin-1 and triafestin-2, anticoagulant proteins from Triatoma infestans. Interacts (inactive and activated) (via amino acids 1-77) with short form salivary protein D7R1, an anticoagulant protein from Anopheles stephensi. Interacts (inactive and activated) (via fibronectin type II domain) with haemaphysalin, an anticoagulant protein from Haemaphysalis longicornis. Post-translationally, factor XII is activated by kallikrein in alpha-factor XIIa, which is further converted by trypsin into beta-factor XIIa. Alpha-factor XIIa is composed of an NH2-terminal heavy chain, called coagulation factor XIIa heavy chain, and a COOH-terminal light chain, called coagulation factor XIIa light chain, connected by a disulfide bond. Beta-factor XIIa is composed of 2 chains linked by a disulfide bond, an N-terminal nonapeptide, called beta-factor XIIa part 1, and coagulation factor XIIa light chain, also known in this context as beta-factor XIIa part 2. In terms of processing, O- and N-glycosylated. The O-linked polysaccharides were not identified, but are probably the mucin type linked to GalNAc.

It is found in the secreted. The catalysed reaction is Selective cleavage of Arg-|-Ile bonds in factor VII to form factor VIIa and factor XI to form factor XIa.. Its activity is regulated as follows. Activity is promoted in the presence of negatively charged surfaces. Its function is as follows. Factor XII is a serum glycoprotein that participates in the initiation of blood coagulation, fibrinolysis, and the generation of bradykinin and angiotensin. Prekallikrein is cleaved by factor XII to form kallikrein, which then cleaves factor XII first to alpha-factor XIIa and then trypsin cleaves it to beta-factor XIIa. Alpha-factor XIIa activates factor XI to factor XIa. This chain is Coagulation factor XII (F12), found in Homo sapiens (Human).